The following is a 701-amino-acid chain: Elongation factor G (701 aa).

In terms of domain architecture, tr-type G spans 11 to 287; the sequence is TKVRNIGIMA…AVIDYLPSPL (277 aa). Residues 20–27, 84–88, and 138–141 each bind GTP; these read AHIDAGKT, DTPGH, and NKMD.

It belongs to the TRAFAC class translation factor GTPase superfamily. Classic translation factor GTPase family. EF-G/EF-2 subfamily.

It localises to the cytoplasm. Its function is as follows. Catalyzes the GTP-dependent ribosomal translocation step during translation elongation. During this step, the ribosome changes from the pre-translocational (PRE) to the post-translocational (POST) state as the newly formed A-site-bound peptidyl-tRNA and P-site-bound deacylated tRNA move to the P and E sites, respectively. Catalyzes the coordinated movement of the two tRNA molecules, the mRNA and conformational changes in the ribosome. The sequence is that of Elongation factor G from Mycobacterium leprae (strain Br4923).